The following is a 194-amino-acid chain: Exopolysaccharide II synthesis transcriptional activator ExpG (194 aa).

The HTH marR-type domain maps to 49-184 (YFELARVMER…AFQTLHRLEL (136 aa)).

Transcriptional activator of genes for galactoglucan synthesis (exopolysaccharide II or EPS II). This chain is Exopolysaccharide II synthesis transcriptional activator ExpG (expG), found in Rhizobium meliloti (strain 1021) (Ensifer meliloti).